The chain runs to 393 residues: Chalcone synthase G (393 aa).

Cysteine 164 is a catalytic residue.

Belongs to the thiolase-like superfamily. Chalcone/stilbene synthases family. As to expression, expressed in seedlings after illumination with UV light. No expression detectable in flowers. It is not known for sure whether CHSG encodes a chalcone synthase or a very closely related condensing enzyme.

The catalysed reaction is (E)-4-coumaroyl-CoA + 3 malonyl-CoA + 3 H(+) = 2',4,4',6'-tetrahydroxychalcone + 3 CO2 + 4 CoA. The protein operates within secondary metabolite biosynthesis; flavonoid biosynthesis. In terms of biological role, the primary product of this enzyme is 4,2',4',6'-tetrahydroxychalcone (also termed naringenin-chalcone or chalcone) which can under specific conditions spontaneously isomerize into naringenin. The chain is Chalcone synthase G (CHSG) from Petunia hybrida (Petunia).